The following is a 346-amino-acid chain: Pyrophosphate--fructose 6-phosphate 1-phosphotransferase (346 aa).

Residue glycine 13 coordinates diphosphate. A Mg(2+)-binding site is contributed by glutamate 105. Substrate is bound by residues 127 to 129 (TID), arginine 164, 171 to 173 (MGR), glutamate 224, arginine 269, and 275 to 278 (HLQR). Aspartate 129 functions as the Proton acceptor in the catalytic mechanism.

Belongs to the phosphofructokinase type A (PFKA) family. Mixed-substrate PFK group III subfamily. In terms of assembly, homodimer. The cofactor is Mg(2+).

The protein resides in the cytoplasm. It catalyses the reaction beta-D-fructose 6-phosphate + diphosphate = beta-D-fructose 1,6-bisphosphate + phosphate + H(+). Its pathway is carbohydrate degradation; glycolysis; D-glyceraldehyde 3-phosphate and glycerone phosphate from D-glucose: step 3/4. Non-allosteric. Catalyzes the phosphorylation of D-fructose 6-phosphate, the first committing step of glycolysis. Uses inorganic phosphate (PPi) as phosphoryl donor instead of ATP like common ATP-dependent phosphofructokinases (ATP-PFKs), which renders the reaction reversible, and can thus function both in glycolysis and gluconeogenesis. Consistently, PPi-PFK can replace the enzymes of both the forward (ATP-PFK) and reverse (fructose-bisphosphatase (FBPase)) reactions. This chain is Pyrophosphate--fructose 6-phosphate 1-phosphotransferase, found in Dictyoglomus thermophilum.